A 165-amino-acid polypeptide reads, in one-letter code: Protein eva-1 homolog B (165 aa).

The chain crosses the membrane as a helical span at residues 29–49; that stretch reads GLYFVLGVCFGLLLTLCLLVI. Disordered regions lie at residues 57-109 and 143-165; these read PRPR…GPLN and LLGT…MHYY. Positions 74–84 are enriched in acidic residues; sequence EPEDDDEDEED. Phosphothreonine occurs at positions 85, 148, and 158.

Belongs to the EVA1 family.

It localises to the membrane. In Homo sapiens (Human), this protein is Protein eva-1 homolog B (EVA1B).